The following is an 88-amino-acid chain: Small ribosomal subunit protein uS17 (88 aa).

It belongs to the universal ribosomal protein uS17 family. Part of the 30S ribosomal subunit.

Its function is as follows. One of the primary rRNA binding proteins, it binds specifically to the 5'-end of 16S ribosomal RNA. This is Small ribosomal subunit protein uS17 from Levilactobacillus brevis (strain ATCC 367 / BCRC 12310 / CIP 105137 / JCM 1170 / LMG 11437 / NCIMB 947 / NCTC 947) (Lactobacillus brevis).